The sequence spans 71 residues: Small ribosomal subunit protein bS21 (71 aa).

The protein belongs to the bacterial ribosomal protein bS21 family.

The polypeptide is Small ribosomal subunit protein bS21 (Hydrogenovibrio crunogenus (strain DSM 25203 / XCL-2) (Thiomicrospira crunogena)).